The sequence spans 264 residues: Thiamine pyrophosphokinase 1 (264 aa).

The segment covering 1–12 has biased composition (polar residues); the sequence is MPLPTMTHSSSF. The tract at residues 1 to 27 is disordered; it reads MPLPTMTHSSSFLRLPATSSPHPPPAD.

It belongs to the thiamine pyrophosphokinase family.

The protein localises to the cytoplasm. It is found in the cytosol. It catalyses the reaction thiamine + ATP = thiamine diphosphate + AMP + H(+). The protein operates within cofactor biosynthesis; thiamine diphosphate biosynthesis; thiamine diphosphate from thiamine: step 1/1. In terms of biological role, catalyzes the phosphorylation of thiamine to thiamine pyrophosphate (TPP). TPP is an active cofactor for enzymes involved in glycolysis and energy production. Plant leaves require high levels of TPP for photosynthesis and carbohydrate metabolism. The sequence is that of Thiamine pyrophosphokinase 1 (TPK1) from Oryza sativa subsp. japonica (Rice).